Here is a 144-residue protein sequence, read N- to C-terminus: MIALIQRVTRAQVDVDGKTAGKIGKGLLVLLGVEKEDNQARANKLAEKVLNYRVFGDENDKMNLNVRQAQGELLVVSQFTLVADTGRGLRPSFSNGATPALADELYRYFIRKCREKIQVETGEFAANMQVSLTNDGPVTFWLQS.

The Gly-cisPro motif, important for rejection of L-amino acids signature appears at 136–137 (GP).

It belongs to the DTD family. In terms of assembly, homodimer.

The protein localises to the cytoplasm. It catalyses the reaction glycyl-tRNA(Ala) + H2O = tRNA(Ala) + glycine + H(+). The catalysed reaction is a D-aminoacyl-tRNA + H2O = a tRNA + a D-alpha-amino acid + H(+). Its function is as follows. An aminoacyl-tRNA editing enzyme that deacylates mischarged D-aminoacyl-tRNAs. Also deacylates mischarged glycyl-tRNA(Ala), protecting cells against glycine mischarging by AlaRS. Acts via tRNA-based rather than protein-based catalysis; rejects L-amino acids rather than detecting D-amino acids in the active site. By recycling D-aminoacyl-tRNA to D-amino acids and free tRNA molecules, this enzyme counteracts the toxicity associated with the formation of D-aminoacyl-tRNA entities in vivo and helps enforce protein L-homochirality. The sequence is that of D-aminoacyl-tRNA deacylase from Actinobacillus succinogenes (strain ATCC 55618 / DSM 22257 / CCUG 43843 / 130Z).